The primary structure comprises 197 residues: Imidazoleglycerol-phosphate dehydratase (197 aa).

The protein belongs to the imidazoleglycerol-phosphate dehydratase family.

The protein localises to the cytoplasm. The catalysed reaction is D-erythro-1-(imidazol-4-yl)glycerol 3-phosphate = 3-(imidazol-4-yl)-2-oxopropyl phosphate + H2O. The protein operates within amino-acid biosynthesis; L-histidine biosynthesis; L-histidine from 5-phospho-alpha-D-ribose 1-diphosphate: step 6/9. In Pseudomonas putida (strain ATCC 700007 / DSM 6899 / JCM 31910 / BCRC 17059 / LMG 24140 / F1), this protein is Imidazoleglycerol-phosphate dehydratase.